A 181-amino-acid chain; its full sequence is Adenine phosphoribosyltransferase (181 aa).

The protein belongs to the purine/pyrimidine phosphoribosyltransferase family. In terms of assembly, homodimer.

The protein localises to the cytoplasm. It carries out the reaction AMP + diphosphate = 5-phospho-alpha-D-ribose 1-diphosphate + adenine. It participates in purine metabolism; AMP biosynthesis via salvage pathway; AMP from adenine: step 1/1. In terms of biological role, catalyzes a salvage reaction resulting in the formation of AMP, that is energically less costly than de novo synthesis. This Pseudoalteromonas translucida (strain TAC 125) protein is Adenine phosphoribosyltransferase.